Reading from the N-terminus, the 237-residue chain is MOB kinase activator 2 (237 aa).

Residues 1–21 (MDWLMGKSKAKPNGKKPAAEE) are disordered. Residues cysteine 78, cysteine 83, histidine 157, and histidine 162 each coordinate Zn(2+). Residues 217 to 229 (GGSGDGAGSGGPG) show a composition bias toward gly residues. Residues 217 to 237 (GGSGDGAGSGGPGAQNHVKER) form a disordered region.

The protein belongs to the MOB1/phocein family. As to quaternary structure, binds STK38 and STK38L. Phosphorylated.

The protein resides in the nucleus. It is found in the cytoplasm. The protein localises to the perinuclear region. Functionally, stimulates the autophosphorylation and kinase activity of STK38 and STK38L. This chain is MOB kinase activator 2 (MOB2), found in Homo sapiens (Human).